Here is a 219-residue protein sequence, read N- to C-terminus: Ribose-5-phosphate isomerase A (219 aa).

Residues 28-31, 81-84, and 94-97 contribute to the substrate site; these read SGST, DGAD, and KGGG. Catalysis depends on E103, which acts as the Proton acceptor. K121 serves as a coordination point for substrate.

Belongs to the ribose 5-phosphate isomerase family. Homodimer.

It carries out the reaction aldehydo-D-ribose 5-phosphate = D-ribulose 5-phosphate. It participates in carbohydrate degradation; pentose phosphate pathway; D-ribose 5-phosphate from D-ribulose 5-phosphate (non-oxidative stage): step 1/1. Catalyzes the reversible conversion of ribose-5-phosphate to ribulose 5-phosphate. The sequence is that of Ribose-5-phosphate isomerase A from Haemophilus influenzae (strain ATCC 51907 / DSM 11121 / KW20 / Rd).